Consider the following 117-residue polypeptide: MFKLHPQKKKTQTRNYTGPWRKTPGRLLGLLLIRFYQITLSSFIGNQCRHAPTCSEYIYEAIARHGLWAGAWMGLFRIMRCGPFGTHGFDPVPTSLGNSYYFYKPWCYWKISARHNK.

It belongs to the UPF0161 family.

The protein localises to the cell inner membrane. Could be involved in insertion of integral membrane proteins into the membrane. The polypeptide is Putative membrane protein insertion efficiency factor (Bartonella quintana (strain Toulouse) (Rochalimaea quintana)).